A 64-amino-acid chain; its full sequence is Prokaryotic ubiquitin-like protein Pup (64 aa).

A disordered region spans residues 1–37 (MAQEQTKRGGGGGEDDDLSGGAGAGQERREKLAEETD). Positions 21-58 (GAGAGQERREKLAEETDDLLDEIDDVLEENAEDFVRAY) are ARC ATPase binding. The stretch at 24 to 52 (AGQERREKLAEETDDLLDEIDDVLEENAE) forms a coiled coil. Position 64 is a deamidated glutamine (Q64). Q64 participates in a covalent cross-link: Isoglutamyl lysine isopeptide (Gln-Lys) (interchain with K-? in acceptor proteins).

This sequence belongs to the prokaryotic ubiquitin-like protein family. As to quaternary structure, strongly interacts with the proteasome-associated ATPase ARC through a hydrophobic interface; the interacting region of Pup lies in its C-terminal half. There is one Pup binding site per ARC hexamer ring. Is modified by deamidation of its C-terminal glutamine to glutamate by the deamidase Dop, a prerequisite to the subsequent pupylation process.

It participates in protein degradation; proteasomal Pup-dependent pathway. In terms of biological role, protein modifier that is covalently attached to lysine residues of substrate proteins, thereby targeting them for proteasomal degradation. The tagging system is termed pupylation. The sequence is that of Prokaryotic ubiquitin-like protein Pup from Mycobacterium sp. (strain JLS).